Consider the following 415-residue polypeptide: Plasminogen activator inhibitor 2, macrophage (415 aa).

Asn23, Asn75, Asn261, and Asn339 each carry an N-linked (GlcNAc...) asparagine glycan.

This sequence belongs to the serpin family. Ov-serpin subfamily. Interacts with PSMB1. The signal sequence is not cleaved.

It is found in the cytoplasm. Its subcellular location is the secreted. It localises to the extracellular space. Inhibits urokinase-type plasminogen activator. The monocyte derived PAI-2 is distinct from the endothelial cell-derived PAI-1. Not required for normal murine development or survival. This is Plasminogen activator inhibitor 2, macrophage (Serpinb2) from Mus musculus (Mouse).